We begin with the raw amino-acid sequence, 538 residues long: Cytochrome P450 734A4 (538 aa).

A helical transmembrane segment spans residues 5 to 27 (VAVAAAVLLLLHVAARVADAVWW). Heme is bound at residue Cys-480.

This sequence belongs to the cytochrome P450 family. Heme is required as a cofactor. As to expression, expressed in roots, shoot apex, leaf sheaths, leaf blades, internodes and panicles.

It is found in the membrane. Cytochrome P450 involved in brassinosteroids (BRs) inactivation and regulation of BRs homeostasis. Is a multifunctional and multisubstrate enzyme that controls the endogenous bioactive BR content both by direct inactivation of castasterone (CS) and by decreasing the levels of BR precursors. Catalyzes the oxidation of carbon 22 hydroxylated BR intermediates to produce C26 oxidized metabolites. This is Cytochrome P450 734A4 (CYP734A4) from Oryza sativa subsp. japonica (Rice).